The sequence spans 708 residues: F-box only protein 43 (708 aa).

The segment at 35-55 (MSQRHSGQAGTEAGNGADSPP) is disordered. The residue at position 76 (S76) is a Phosphoserine. T234 carries the phosphothreonine modification. The disordered stretch occupies residues 320 to 426 (PSPEVRGSIS…ISEGQLSSDE (107 aa)). Polar residues predominate over residues 327–337 (SISTPEDSGFN). S334 carries the post-translational modification Phosphoserine. Residues 374 to 385 (KTRHLGRSRRLS) are compositionally biased toward basic residues. Over residues 399 to 411 (EKQIVHPDSEKRA) the composition is skewed to basic and acidic residues. An F-box domain is found at 490 to 547 (MGIEKLDILTELKYRNLKHILAMVLESLTAESLCSVWKVSRNWREIVVQDKNANRRRK). The ZBR-type zinc-finger motif lies at 636-684 (ALKPCPRCQSPAKYQPYKKRGLCSRTACGFDFCVLCLCAYHGSEECSRG). Zn(2+)-binding residues include C640, C643, C658, C663, C668, C671, H676, and C681. Positions 682-708 (SRGAAKPRNRKDALPGSAQSKRNLKRL) are disordered.

Part of a SCF (SKP1-cullin-F-box) protein ligase complex. According to PubMed:34595750 interaction with SKP1 does not occur. Interacts with ANAPC2; the interaction is direct, ANAPC4, CDC16, CDC23; the interaction is direct, ANAPC10; the interaction is direct and CDC26, during spermatogenesis. May interact with CDC20. Post-translationally, phosphorylated on Ser-76, Thr-234 and Ser-334 in response to calcium, which is a prerequisite for ubiquitination and proteasomal degradation. Ubiquitinated in response to calcium, which promotes proteasomal degradation. Expressed in the testis.

Its pathway is protein modification; protein ubiquitination. Functionally, required to establish and maintain the arrest of oocytes at the second meiotic metaphase until fertilization. Acts by inhibiting the anaphase-promoting complex/cyclosome (APC/C) ubiquitin ligase. Probably recognizes and binds to some phosphorylated proteins and promotes their ubiquitination and degradation. Plays a vital role in modulating the ubiquitilation of CCNB1 and CDK1 during gametogenesis. This chain is F-box only protein 43 (FBXO43), found in Homo sapiens (Human).